The primary structure comprises 382 residues: Carbamoyl phosphate synthase small chain (382 aa).

The tract at residues 1-189 (MIKSALLVLE…GLPEAKSEDD (189 aa)) is CPSase. L-glutamine contacts are provided by Ser-47, Gly-241, and Gly-243. Positions 193 to 380 (HVVAYDFGAK…IELIEQYRQS (188 aa)) constitute a Glutamine amidotransferase type-1 domain. The active-site Nucleophile is the Cys-269. Leu-270, Gln-273, Asn-311, Gly-313, and Phe-314 together coordinate L-glutamine. Active-site residues include His-353 and Glu-355.

Belongs to the CarA family. As to quaternary structure, composed of two chains; the small (or glutamine) chain promotes the hydrolysis of glutamine to ammonia, which is used by the large (or ammonia) chain to synthesize carbamoyl phosphate. Tetramer of heterodimers (alpha,beta)4.

It catalyses the reaction hydrogencarbonate + L-glutamine + 2 ATP + H2O = carbamoyl phosphate + L-glutamate + 2 ADP + phosphate + 2 H(+). It carries out the reaction L-glutamine + H2O = L-glutamate + NH4(+). The protein operates within amino-acid biosynthesis; L-arginine biosynthesis; carbamoyl phosphate from bicarbonate: step 1/1. It functions in the pathway pyrimidine metabolism; UMP biosynthesis via de novo pathway; (S)-dihydroorotate from bicarbonate: step 1/3. Functionally, small subunit of the glutamine-dependent carbamoyl phosphate synthetase (CPSase). CPSase catalyzes the formation of carbamoyl phosphate from the ammonia moiety of glutamine, carbonate, and phosphate donated by ATP, constituting the first step of 2 biosynthetic pathways, one leading to arginine and/or urea and the other to pyrimidine nucleotides. The small subunit (glutamine amidotransferase) binds and cleaves glutamine to supply the large subunit with the substrate ammonia. The polypeptide is Carbamoyl phosphate synthase small chain (Salmonella typhimurium (strain LT2 / SGSC1412 / ATCC 700720)).